Reading from the N-terminus, the 411-residue chain is Thyroxine-binding globulin (411 aa).

Positions 1–15 (MPLFSLVLLILGLHC) are cleaved as a signal peptide. Residues asparagine 34, asparagine 97, asparagine 163, and asparagine 251 are each glycosylated (N-linked (GlcNAc...) asparagine). Asparagine 291 and lysine 394 together coordinate thyroxine.

The protein belongs to the serpin family. As to expression, expressed by the liver and secreted in plasma.

Its subcellular location is the secreted. Major thyroid hormone transport protein in serum. This is Thyroxine-binding globulin (SERPINA7) from Bos taurus (Bovine).